A 349-amino-acid chain; its full sequence is Nuclear distribution protein nudE homolog 1-A (349 aa).

Residues 22–189 (VAMKYKQCSE…ELAVQQKQEK (168 aa)) are a coiled coil.

Belongs to the nudE family. As to quaternary structure, self-associates. Interacts with pafah1b1. Post-translationally, phosphorylated in mitosis.

Its subcellular location is the cytoplasm. It localises to the cytoskeleton. It is found in the microtubule organizing center. The protein localises to the centrosome. The protein resides in the spindle. Its subcellular location is the chromosome. It localises to the centromere. It is found in the kinetochore. The protein localises to the cleavage furrow. The protein resides in the cytoplasmic vesicle membrane. Functionally, required for centrosome duplication and formation and function of the mitotic spindle. The chain is Nuclear distribution protein nudE homolog 1-A (nde1-a) from Xenopus laevis (African clawed frog).